The sequence spans 134 residues: Small ribosomal subunit protein uS9 (134 aa).

The disordered stretch occupies residues 109 to 134 (DARRTEPHKPSKSSKGPRAKRQKSYR). Residues 118-134 (PSKSSKGPRAKRQKSYR) are compositionally biased toward basic residues.

The protein belongs to the universal ribosomal protein uS9 family.

This Methanococcus maripaludis (strain C5 / ATCC BAA-1333) protein is Small ribosomal subunit protein uS9.